The chain runs to 307 residues: Ribosomal RNA small subunit methyltransferase H (307 aa).

S-adenosyl-L-methionine-binding positions include 32–34 (GGH), Asp-52, Phe-78, Asp-100, and Gln-107.

This sequence belongs to the methyltransferase superfamily. RsmH family.

It is found in the cytoplasm. The enzyme catalyses cytidine(1402) in 16S rRNA + S-adenosyl-L-methionine = N(4)-methylcytidine(1402) in 16S rRNA + S-adenosyl-L-homocysteine + H(+). Specifically methylates the N4 position of cytidine in position 1402 (C1402) of 16S rRNA. The chain is Ribosomal RNA small subunit methyltransferase H from Coxiella burnetii (strain CbuG_Q212) (Coxiella burnetii (strain Q212)).